We begin with the raw amino-acid sequence, 448 residues long: Glutamyl-tRNA reductase (448 aa).

Residues 49-52, Ser109, 114-116, and Gln120 each bind substrate; these read TCNR and ETQ. Cys50 acts as the Nucleophile in catalysis. 189–194 contributes to the NADP(+) binding site; the sequence is GAGEMS.

Belongs to the glutamyl-tRNA reductase family. In terms of assembly, homodimer.

It catalyses the reaction (S)-4-amino-5-oxopentanoate + tRNA(Glu) + NADP(+) = L-glutamyl-tRNA(Glu) + NADPH + H(+). Its pathway is porphyrin-containing compound metabolism; protoporphyrin-IX biosynthesis; 5-aminolevulinate from L-glutamyl-tRNA(Glu): step 1/2. Catalyzes the NADPH-dependent reduction of glutamyl-tRNA(Glu) to glutamate 1-semialdehyde (GSA). The polypeptide is Glutamyl-tRNA reductase (Staphylococcus aureus (strain Mu3 / ATCC 700698)).